A 751-amino-acid polypeptide reads, in one-letter code: WD repeat-containing protein 91 (751 aa).

Positions 183-205 form a coiled coil; the sequence is QKIACLQEENEIMRQKLFALQAE. Positions 237–398 are disordered; that stretch reads ELGSNIMSSH…GARKEEKPAQ (162 aa). Polar residues predominate over residues 238–267; that stretch reads LGSNIMSSHSNTNMNTPSQRTSGFLSSLLA. The span at 356–373 shows a compositional bias: basic and acidic residues; that stretch reads TEKKAENSDADPDLRSDT. WD repeat units follow at residues 410 to 449, 452 to 492, 517 to 559, 564 to 603, 606 to 645, 668 to 706, and 713 to 751; these read EHHS…QTKA, ISKS…NLCE, SAAA…QQLQ, PVPI…CALS, AHMG…QKVS, VQFP…STLE, and GHRA…AQKS.

This sequence belongs to the WD repeat WDR91 family.

The protein localises to the early endosome membrane. It localises to the late endosome membrane. In terms of biological role, functions as a negative regulator of the PI3 kinase/PI3K activity associated with endosomal membranes. By modifying the phosphatidylinositol 3-phosphate/PtdInsP3 content of endosomal membranes may regulate endosome fusion, recycling, sorting and early to late endosome transport. The chain is WD repeat-containing protein 91 from Xenopus tropicalis (Western clawed frog).